The sequence spans 160 residues: Lymphocyte antigen 86 (160 aa).

The N-terminal stretch at 1–20 (MKTLNVLALVLVLLCINAST) is a signal peptide. Disulfide bonds link Cys28/Cys53, Cys40/Cys149, and Cys97/Cys107.

As to quaternary structure, M-shaped tetramer of two CD180-LY86 heterodimers. As to expression, detected in the macrophage-like 10.4 cells.

Its subcellular location is the secreted. The protein localises to the extracellular space. In terms of biological role, may cooperate with CD180 and TLR4 to mediate the innate immune response to bacterial lipopolysaccharide (LPS) and cytokine production. Important for efficient CD180 cell surface expression. This is Lymphocyte antigen 86 (LY86) from Gallus gallus (Chicken).